The following is a 229-amino-acid chain: Bcl-2-like protein 1 (229 aa).

Residues 4–24 carry the BH4 motif; sequence SNRELVIDFVSYKLSQRGHCW. Residues 82-96 carry the BH3 motif; it reads VRQALRDAGDEFELR. A BH1 motif is present at residues 125–144; sequence ELFHDGVNWGRIVAFFSFGG. A BH2 motif is present at residues 176-191; it reads PWIQENGGWERFVDLY. Residues 206 to 223 form a helical membrane-spanning segment; sequence FNKWLLTGATVAGVLLLG.

Belongs to the Bcl-2 family. Highest expression in organs with lymphoid development.

Its subcellular location is the mitochondrion membrane. The protein localises to the nucleus membrane. It is found in the mitochondrion matrix. It localises to the cytoplasm. The protein resides in the cytoskeleton. Its subcellular location is the microtubule organizing center. The protein localises to the centrosome. It is found in the cytosol. It localises to the cytoplasmic vesicle. The protein resides in the secretory vesicle. Its subcellular location is the synaptic vesicle membrane. In terms of biological role, dominant regulator of apoptotic cell death. The long form displays cell death repressor activity, whereas the short isoform promotes apoptosis. Also acts as a regulator of G2 checkpoint and progression to cytokinesis during mitosis. The chain is Bcl-2-like protein 1 (BCL2L1) from Gallus gallus (Chicken).